Consider the following 315-residue polypeptide: tRNA dimethylallyltransferase (315 aa).

Residue 14–21 (GPTASGKT) coordinates ATP. Residue 16–21 (TASGKT) participates in substrate binding. Interaction with substrate tRNA regions lie at residues 39-42 (DSAL), 163-167 (QRIQR), and 248-253 (RCVGYR).

Belongs to the IPP transferase family. In terms of assembly, monomer. Mg(2+) serves as cofactor.

The catalysed reaction is adenosine(37) in tRNA + dimethylallyl diphosphate = N(6)-dimethylallyladenosine(37) in tRNA + diphosphate. Functionally, catalyzes the transfer of a dimethylallyl group onto the adenine at position 37 in tRNAs that read codons beginning with uridine, leading to the formation of N6-(dimethylallyl)adenosine (i(6)A). The sequence is that of tRNA dimethylallyltransferase from Paraburkholderia xenovorans (strain LB400).